The following is a 312-amino-acid chain: Glyoxylate/hydroxypyruvate reductase A (312 aa).

R227 is a catalytic residue. H275 functions as the Proton donor in the catalytic mechanism.

The protein belongs to the D-isomer specific 2-hydroxyacid dehydrogenase family. GhrA subfamily.

Its subcellular location is the cytoplasm. The enzyme catalyses glycolate + NADP(+) = glyoxylate + NADPH + H(+). It carries out the reaction (R)-glycerate + NAD(+) = 3-hydroxypyruvate + NADH + H(+). The catalysed reaction is (R)-glycerate + NADP(+) = 3-hydroxypyruvate + NADPH + H(+). In terms of biological role, catalyzes the NADPH-dependent reduction of glyoxylate and hydroxypyruvate into glycolate and glycerate, respectively. The sequence is that of Glyoxylate/hydroxypyruvate reductase A from Klebsiella pneumoniae (strain 342).